We begin with the raw amino-acid sequence, 490 residues long: Betaine aldehyde dehydrogenase (490 aa).

D93 is a K(+) binding site. Residue G150–W152 coordinates NAD(+). Residue K162 is the Charge relay system of the active site. Residue K176 to E179 participates in NAD(+) binding. Residue V180 coordinates K(+). G230–S233 is an NAD(+) binding site. Residue L246 participates in K(+) binding. The Proton acceptor role is filled by E252. Residues G254, C286, and E387 each contribute to the NAD(+) site. Residue C286 is the Nucleophile of the active site. C286 carries the cysteine sulfenic acid (-SOH) modification. K(+)-binding residues include K457 and G460. E464 functions as the Charge relay system in the catalytic mechanism.

The protein belongs to the aldehyde dehydrogenase family. In terms of assembly, dimer of dimers. Requires K(+) as cofactor.

The enzyme catalyses betaine aldehyde + NAD(+) + H2O = glycine betaine + NADH + 2 H(+). Its pathway is amine and polyamine biosynthesis; betaine biosynthesis via choline pathway; betaine from betaine aldehyde: step 1/1. Functionally, involved in the biosynthesis of the osmoprotectant glycine betaine. Catalyzes the irreversible oxidation of betaine aldehyde to the corresponding acid. The chain is Betaine aldehyde dehydrogenase from Yersinia pseudotuberculosis serotype I (strain IP32953).